The following is a 362-amino-acid chain: Mitochondrial glycine transporter (362 aa).

Solcar repeat units lie at residues 22 to 108, 132 to 236, and 269 to 354; these read PDAT…MRTS, LTAM…FKND, and RSSI…LIKS. 6 helical membrane passes run 28-53, 83-109, 138-163, 211-234, 273-299, and 329-347; these read LLAG…TRLQ, GTLP…RTSW, LTTG…TRFE, GSVA…EAFK, INST…KTRL, and GLSL…SWCI.

The protein belongs to the mitochondrial carrier (TC 2.A.29) family. SLC25A38 subfamily.

The protein localises to the mitochondrion inner membrane. The catalysed reaction is glycine(in) = glycine(out). Its function is as follows. Mitochondrial glycine transporter that imports glycine into the mitochondrial matrix. Plays an important role in providing glycine for the first enzymatic step in heme biosynthesis, the condensation of glycine with succinyl-CoA to produce 5-aminolevulinate (ALA) in the mitochondrial matrix. This chain is Mitochondrial glycine transporter, found in Candida albicans (strain SC5314 / ATCC MYA-2876) (Yeast).